The chain runs to 96 residues: Co-chaperonin GroES (96 aa).

The protein belongs to the GroES chaperonin family. As to quaternary structure, heptamer of 7 subunits arranged in a ring. Interacts with the chaperonin GroEL.

Its subcellular location is the cytoplasm. Its function is as follows. Together with the chaperonin GroEL, plays an essential role in assisting protein folding. The GroEL-GroES system forms a nano-cage that allows encapsulation of the non-native substrate proteins and provides a physical environment optimized to promote and accelerate protein folding. GroES binds to the apical surface of the GroEL ring, thereby capping the opening of the GroEL channel. In Paracidovorax citrulli (strain AAC00-1) (Acidovorax citrulli), this protein is Co-chaperonin GroES.